Consider the following 400-residue polypeptide: Acetate kinase (400 aa).

Asn-10 serves as a coordination point for Mg(2+). Lys-17 provides a ligand contact to ATP. Arg-91 lines the substrate pocket. Asp-150 serves as the catalytic Proton donor/acceptor. Residues His-210–Gly-214, Asp-285–Arg-287, and Gly-333–Asn-337 contribute to the ATP site. Glu-387 serves as a coordination point for Mg(2+).

Belongs to the acetokinase family. As to quaternary structure, homodimer. Mg(2+) serves as cofactor. Mn(2+) is required as a cofactor.

The protein localises to the cytoplasm. It carries out the reaction acetate + ATP = acetyl phosphate + ADP. Its pathway is metabolic intermediate biosynthesis; acetyl-CoA biosynthesis; acetyl-CoA from acetate: step 1/2. In terms of biological role, catalyzes the formation of acetyl phosphate from acetate and ATP. Can also catalyze the reverse reaction. This chain is Acetate kinase, found in Yersinia pestis bv. Antiqua (strain Antiqua).